The primary structure comprises 883 residues: Phosphoenolpyruvate carboxylase (883 aa).

Catalysis depends on residues H138 and K546.

Belongs to the PEPCase type 1 family. Mg(2+) serves as cofactor.

The enzyme catalyses oxaloacetate + phosphate = phosphoenolpyruvate + hydrogencarbonate. Its function is as follows. Forms oxaloacetate, a four-carbon dicarboxylic acid source for the tricarboxylic acid cycle. This is Phosphoenolpyruvate carboxylase from Escherichia coli O127:H6 (strain E2348/69 / EPEC).